The primary structure comprises 256 residues: MTNMAAKNQFKGSSFTLAQLIEEVGRNGGKKPVFQYKVPRSIRWASTALAVVFLTYGAAYTDMSWRTAREVYGNATEEEKHSPWFKCKTFGPVALGVLPVILAAATKHVTSRLVTEMKYLPPLKNSTVPRCQLTRRTYLLGRPVSITREINELSKNKATKIFTGVGSQGMEDKATFVFFTVDEKAPSFFNKFYIFSRSGSVVKNDARILDCFFNSVAENKLLNRSILTQILSHTSAKTLFHSGNSRSSIKNIVKPK.

This is an uncharacterized protein from Saccharomyces cerevisiae (strain ATCC 204508 / S288c) (Baker's yeast).